The primary structure comprises 200 residues: Dual specificity tyrosine-phosphorylation-regulated kinase 1A (200 aa).

Tyrosine 41 carries the post-translational modification Phosphotyrosine; by autocatalysis. Lysine 58 provides a ligand contact to ATP. At tyrosine 76 the chain carries Phosphotyrosine; by autocatalysis. Serine 88 carries the phosphoserine; by autocatalysis modification. Residue threonine 122 is modified to Phosphothreonine; by autocatalysis.

This sequence belongs to the protein kinase superfamily. CMGC Ser/Thr protein kinase family. MNB/DYRK subfamily. Interacts with RAD54L2/ARIP4. Interacts with CRY2. Interacts with RANBP9. Interacts with WDR68. Interacts with SIRT1. Post-translationally, can also autophosphorylate on serine and threonine residues (in vitro). Autophosphorylated on numerous tyrosine residues.

The protein resides in the nucleus. It catalyses the reaction L-tyrosyl-[protein] + ATP = O-phospho-L-tyrosyl-[protein] + ADP + H(+). The enzyme catalyses L-seryl-[protein] + ATP = O-phospho-L-seryl-[protein] + ADP + H(+). The catalysed reaction is L-threonyl-[protein] + ATP = O-phospho-L-threonyl-[protein] + ADP + H(+). It carries out the reaction [DNA-directed RNA polymerase] + ATP = phospho-[DNA-directed RNA polymerase] + ADP + H(+). Its activity is regulated as follows. Inhibited by RANBP9. Its function is as follows. Dual-specificity kinase which possesses both serine/threonine and tyrosine kinase activities. Exhibits a substrate preference for proline at position P+1 and arginine at position P-3. Plays an important role in double-strand breaks (DSBs) repair following DNA damage. Mechanistically, phosphorylates RNF169 and increases its ability to block accumulation of TP53BP1 at the DSB sites thereby promoting homologous recombination repair (HRR). Also acts as a positive regulator of transcription by acting as a CTD kinase that mediates phosphorylation of the CTD (C-terminal domain) of the large subunit of RNA polymerase II (RNAP II) POLR2A. May play a role in a signaling pathway regulating nuclear functions of cell proliferation. Modulates alternative splicing by phosphorylating the splice factor SRSF6. Has pro-survival function and negatively regulates the apoptotic process. Promotes cell survival upon genotoxic stress through phosphorylation of SIRT1. This in turn inhibits p53/TP53 activity and apoptosis. Phosphorylates SEPTIN4, SEPTIN5 and SF3B1 at 'Thr-434'. This Oryctolagus cuniculus (Rabbit) protein is Dual specificity tyrosine-phosphorylation-regulated kinase 1A.